Here is a 400-residue protein sequence, read N- to C-terminus: DNA polymerase IV (400 aa).

In terms of domain architecture, UmuC spans 5–187 (IFLVDMNAFF…LPVEFMNGIG (183 aa)). Positions 9 and 105 each coordinate Mg(2+). Residue Glu-106 is part of the active site.

It belongs to the DNA polymerase type-Y family. In terms of assembly, monomer. Requires Mg(2+) as cofactor.

Its subcellular location is the cytoplasm. It catalyses the reaction DNA(n) + a 2'-deoxyribonucleoside 5'-triphosphate = DNA(n+1) + diphosphate. Its function is as follows. Poorly processive, error-prone DNA polymerase involved in untargeted mutagenesis. Copies undamaged DNA at stalled replication forks, which arise in vivo from mismatched or misaligned primer ends. These misaligned primers can be extended by PolIV. Exhibits no 3'-5' exonuclease (proofreading) activity. May be involved in translesional synthesis, in conjunction with the beta clamp from PolIII. This Clostridium kluyveri (strain ATCC 8527 / DSM 555 / NBRC 12016 / NCIMB 10680 / K1) protein is DNA polymerase IV.